A 504-amino-acid chain; its full sequence is Catalase (504 aa).

Residues 1–25 (MSKQDGKLTGLFGAPVSDRENSMTA) are disordered. Active-site residues include H56 and N129. Y339 is a heme binding site.

This sequence belongs to the catalase family. As to quaternary structure, homodimer. Heme is required as a cofactor.

It carries out the reaction 2 H2O2 = O2 + 2 H2O. Decomposes hydrogen peroxide into water and oxygen; serves to protect cells from the toxic effects of hydrogen peroxide. The protein is Catalase (katA) of Staphylococcus epidermidis (strain ATCC 35984 / DSM 28319 / BCRC 17069 / CCUG 31568 / BM 3577 / RP62A).